Here is a 242-residue protein sequence, read N- to C-terminus: Type III pantothenate kinase (242 aa).

ATP is bound at residue 7-14 (DLGNSRFK). Substrate contacts are provided by residues Y91 and 98–101 (GVDR). D100 functions as the Proton acceptor in the catalytic mechanism. T121 is a binding site for ATP. T171 is a substrate binding site.

Belongs to the type III pantothenate kinase family. Homodimer. NH4(+) is required as a cofactor. It depends on K(+) as a cofactor.

The protein resides in the cytoplasm. The catalysed reaction is (R)-pantothenate + ATP = (R)-4'-phosphopantothenate + ADP + H(+). It functions in the pathway cofactor biosynthesis; coenzyme A biosynthesis; CoA from (R)-pantothenate: step 1/5. Catalyzes the phosphorylation of pantothenate (Pan), the first step in CoA biosynthesis. In Xylella fastidiosa (strain M23), this protein is Type III pantothenate kinase.